A 143-amino-acid chain; its full sequence is MTDRLTQLQICLDQMMEQFCGAVNYVDKNHGFEPSNDSEEQMSDPQAHIVEEKEFEKNIDELTTDIILKTRQIMALIDSLPGVDVSAQEQLHRIDSLQKQLIKMEKEKIDAIKRKDALQEKVRTLTQDFTIGINESKTEARLV.

Residues 53–130 (KEFEKNIDEL…KVRTLTQDFT (78 aa)) adopt a coiled-coil conformation.

This sequence belongs to the Mediator complex subunit 21 family. Component of the Mediator complex.

It localises to the nucleus. Its function is as follows. Component of the Mediator complex, a coactivator involved in the regulated transcription of nearly all RNA polymerase II-dependent genes. Mediator functions as a bridge to convey information from gene-specific regulatory proteins to the basal RNA polymerase II transcription machinery. Mediator is recruited to promoters by direct interactions with regulatory proteins and serves as a scaffold for the assembly of a functional preinitiation complex with RNA polymerase II and the general transcription factors. This is Mediator of RNA polymerase II transcription subunit 21 (SRB7) from Kluyveromyces lactis (strain ATCC 8585 / CBS 2359 / DSM 70799 / NBRC 1267 / NRRL Y-1140 / WM37) (Yeast).